Consider the following 172-residue polypeptide: Adenine phosphoribosyltransferase (172 aa).

This sequence belongs to the purine/pyrimidine phosphoribosyltransferase family. In terms of assembly, homodimer.

The protein resides in the cytoplasm. The enzyme catalyses AMP + diphosphate = 5-phospho-alpha-D-ribose 1-diphosphate + adenine. Its pathway is purine metabolism; AMP biosynthesis via salvage pathway; AMP from adenine: step 1/1. In terms of biological role, catalyzes a salvage reaction resulting in the formation of AMP, that is energically less costly than de novo synthesis. The polypeptide is Adenine phosphoribosyltransferase (Streptococcus equi subsp. zooepidemicus (strain H70)).